A 254-amino-acid polypeptide reads, in one-letter code: UPF0246 protein FTM_0239 (254 aa).

It belongs to the UPF0246 family.

In Francisella tularensis subsp. mediasiatica (strain FSC147), this protein is UPF0246 protein FTM_0239.